The sequence spans 169 residues: Putative phosphoesterase SACOL1020 (169 aa).

Histidine 34 (proton donor) is an active-site residue. 2 short sequence motifs (HXTX) span residues 34-37 and 115-118; these read HVTI and HFTI. Histidine 115 acts as the Proton acceptor in catalysis.

Belongs to the 2H phosphoesterase superfamily. YjcG family.

The sequence is that of Putative phosphoesterase SACOL1020 from Staphylococcus aureus (strain COL).